A 303-amino-acid polypeptide reads, in one-letter code: UDP-3-O-acyl-N-acetylglucosamine deacetylase (303 aa).

3 residues coordinate Zn(2+): His78, His237, and Asp241. The active-site Proton donor is His264.

Belongs to the LpxC family. It depends on Zn(2+) as a cofactor.

The catalysed reaction is a UDP-3-O-[(3R)-3-hydroxyacyl]-N-acetyl-alpha-D-glucosamine + H2O = a UDP-3-O-[(3R)-3-hydroxyacyl]-alpha-D-glucosamine + acetate. Its pathway is glycolipid biosynthesis; lipid IV(A) biosynthesis; lipid IV(A) from (3R)-3-hydroxytetradecanoyl-[acyl-carrier-protein] and UDP-N-acetyl-alpha-D-glucosamine: step 2/6. Catalyzes the hydrolysis of UDP-3-O-myristoyl-N-acetylglucosamine to form UDP-3-O-myristoylglucosamine and acetate, the committed step in lipid A biosynthesis. The chain is UDP-3-O-acyl-N-acetylglucosamine deacetylase from Cellvibrio japonicus (strain Ueda107) (Pseudomonas fluorescens subsp. cellulosa).